The sequence spans 354 residues: Arginase (354 aa).

H136, D159, H161, and D163 together coordinate Mn(2+). 3 residues coordinate L-arginine: N165, S172, and D217. Residues D266 and D268 each contribute to the Mn(2+) site.

Belongs to the arginase family. As to quaternary structure, homotrimer; oligomerization is dependent on Mn(2+) binding. Requires Mn(2+) as cofactor.

The catalysed reaction is L-arginine + H2O = urea + L-ornithine. Its pathway is nitrogen metabolism; urea cycle; L-ornithine and urea from L-arginine: step 1/1. Its function is as follows. Catalyzes the hydrolysis of L-arginine into urea and L-ornithine, which is a precursor for polyamine biosynthesis. May play a role in parasite intra-hepatic development during the host liver stage. This chain is Arginase, found in Plasmodium berghei (strain Anka).